Reading from the N-terminus, the 120-residue chain is Ribonuclease P protein component (120 aa).

The protein belongs to the RnpA family. In terms of assembly, consists of a catalytic RNA component (M1 or rnpB) and a protein subunit.

It catalyses the reaction Endonucleolytic cleavage of RNA, removing 5'-extranucleotides from tRNA precursor.. Its function is as follows. RNaseP catalyzes the removal of the 5'-leader sequence from pre-tRNA to produce the mature 5'-terminus. It can also cleave other RNA substrates such as 4.5S RNA. The protein component plays an auxiliary but essential role in vivo by binding to the 5'-leader sequence and broadening the substrate specificity of the ribozyme. This is Ribonuclease P protein component from Chlamydia trachomatis serovar A (strain ATCC VR-571B / DSM 19440 / HAR-13).